The primary structure comprises 447 residues: Asparagine--tRNA ligase (447 aa).

Belongs to the class-II aminoacyl-tRNA synthetase family. Homodimer.

It localises to the cytoplasm. It catalyses the reaction tRNA(Asn) + L-asparagine + ATP = L-asparaginyl-tRNA(Asn) + AMP + diphosphate + H(+). This Streptococcus pneumoniae serotype 4 (strain ATCC BAA-334 / TIGR4) protein is Asparagine--tRNA ligase.